A 333-amino-acid polypeptide reads, in one-letter code: UPF0284 protein TGAM_0534 (333 aa).

The protein belongs to the UPF0284 family.

The polypeptide is UPF0284 protein TGAM_0534 (Thermococcus gammatolerans (strain DSM 15229 / JCM 11827 / EJ3)).